The sequence spans 421 residues: GTPase Obg (421 aa).

An Obg domain is found at 1 to 158; that stretch reads MFIDVAKIEL…KTIKLELKLL (158 aa). A disordered region spans residues 21–40; that stretch reads AFRREKYEPSGGPAGGDGGD. One can recognise an OBG-type G domain in the interval 159 to 328; the sequence is ADVGLIGLPN…LMYLIADTLD (170 aa). GTP contacts are provided by residues 165 to 172, 190 to 194, 211 to 214, 281 to 284, and 309 to 311; these read GLPNVGKS, FTTLE, DIPG, NKTD, and SAA. Residues Ser-172 and Thr-192 each coordinate Mg(2+). The OCT domain occupies 344–421; that stretch reads FEEEKEPDFK…IGDVEFDFYE (78 aa).

This sequence belongs to the TRAFAC class OBG-HflX-like GTPase superfamily. OBG GTPase family. As to quaternary structure, monomer. The cofactor is Mg(2+).

The protein resides in the cytoplasm. Functionally, an essential GTPase which binds GTP, GDP and possibly (p)ppGpp with moderate affinity, with high nucleotide exchange rates and a fairly low GTP hydrolysis rate. Plays a role in control of the cell cycle, stress response, ribosome biogenesis and in those bacteria that undergo differentiation, in morphogenesis control. The polypeptide is GTPase Obg (Finegoldia magna (strain ATCC 29328 / DSM 20472 / WAL 2508) (Peptostreptococcus magnus)).